A 389-amino-acid polypeptide reads, in one-letter code: tRNA(Met) cytidine acetate ligase (389 aa).

Residues Ile8–Leu21, Gly97, Asn153, and Arg176 each bind ATP.

It belongs to the TmcAL family.

Its subcellular location is the cytoplasm. It carries out the reaction cytidine(34) in elongator tRNA(Met) + acetate + ATP = N(4)-acetylcytidine(34) in elongator tRNA(Met) + AMP + diphosphate. Functionally, catalyzes the formation of N(4)-acetylcytidine (ac(4)C) at the wobble position of elongator tRNA(Met), using acetate and ATP as substrates. First activates an acetate ion to form acetyladenylate (Ac-AMP) and then transfers the acetyl group to tRNA to form ac(4)C34. The sequence is that of tRNA(Met) cytidine acetate ligase from Lactococcus lactis subsp. cremoris (strain SK11).